A 311-amino-acid chain; its full sequence is 4-diphosphocytidyl-2-C-methyl-D-erythritol kinase (311 aa).

K16 is a catalytic residue. Residue 100–110 (PIGAGLAGGSS) participates in ATP binding. D142 is an active-site residue.

The protein belongs to the GHMP kinase family. IspE subfamily.

The catalysed reaction is 4-CDP-2-C-methyl-D-erythritol + ATP = 4-CDP-2-C-methyl-D-erythritol 2-phosphate + ADP + H(+). The protein operates within isoprenoid biosynthesis; isopentenyl diphosphate biosynthesis via DXP pathway; isopentenyl diphosphate from 1-deoxy-D-xylulose 5-phosphate: step 3/6. Functionally, catalyzes the phosphorylation of the position 2 hydroxy group of 4-diphosphocytidyl-2C-methyl-D-erythritol. The sequence is that of 4-diphosphocytidyl-2-C-methyl-D-erythritol kinase from Prochlorococcus marinus (strain AS9601).